We begin with the raw amino-acid sequence, 391 residues long: Argininosuccinate synthase (391 aa).

An ATP-binding site is contributed by 6–14 (AYSGGLDTT). Tyr84 lines the L-citrulline pocket. Residue Gly114 participates in ATP binding. Residues Thr116, Asn120, and Asp121 each coordinate L-aspartate. Position 120 (Asn120) interacts with L-citrulline. The L-citrulline site is built by Arg124, Ser171, Ser180, Glu253, and Tyr265.

This sequence belongs to the argininosuccinate synthase family. Type 1 subfamily. As to quaternary structure, homotetramer.

The protein localises to the cytoplasm. It catalyses the reaction L-citrulline + L-aspartate + ATP = 2-(N(omega)-L-arginino)succinate + AMP + diphosphate + H(+). Its pathway is amino-acid biosynthesis; L-arginine biosynthesis; L-arginine from L-ornithine and carbamoyl phosphate: step 2/3. The polypeptide is Argininosuccinate synthase (Saccharolobus solfataricus (strain ATCC 35092 / DSM 1617 / JCM 11322 / P2) (Sulfolobus solfataricus)).